The primary structure comprises 621 residues: MIRSTTAKLGKRCATLRVRASPILRPLVATRCITNKADEVFTKLSDENDPKRDAFFNYSWGSWLVNDKQEKAKRVTKFSLEGLTDVLNEIYADSQQLAKTVKSNRIPAPNHKKNLIVTLPHNTMIKDLGTVNPNEKVRVIRMASIHEGKHHRIYKLDTNIDRSFVLRIPYALENGHVIESRLKSEVATMDFAHLKLGINVPKVYCYGVNALNPVRQPFVLEEFIEGKLLMRDWNPLVDDKKDSLPDDNLKSVVEQVSDLQSKLLSMQFNGIGSLYFSKDYERPGEPKKSVYDGESNPDLQGRWIIGPTAERVFWRKKSVLNKEALSKFLGPWSANEPLEVVKNTGLVEAENAKARLALKQADASPEAVDETTLSEQIVSFENLATVGPHLFDSGTTTIPNVKELLKPRLYHPDLDPMNIIVTAEGTPYLLDFEGSSVKPFILHNSPQFVAYDGPKIFDLQEDIPDYEKLVDSEKAQYEFMYKRTRNQFLWDSALNERNNKLISAVAPPVKLLRSPYIAAVERKSDDEYLLIDEALIQLAEVWEVFYKNGLVKDANYPLTFSKETLEKHANDLNAFHEKLISRPFAATQGWIPQDMFENLIKAGILVKESDSSYTVKTENLD.

A mitochondrion-targeting transit peptide spans 1–40 (MIRSTTAKLGKRCATLRVRASPILRPLVATRCITNKADEV).

The protein belongs to the AIM9 family.

The protein localises to the mitochondrion. The polypeptide is Altered inheritance of mitochondria protein 9, mitochondrial (AIM9) (Zygosaccharomyces rouxii (strain ATCC 2623 / CBS 732 / NBRC 1130 / NCYC 568 / NRRL Y-229)).